The following is a 359-amino-acid chain: MNIYDQLQAVEDRYEELGELLSDPDVVSDTKRFMELSREEANTRETVTAYREYKQVIQTISDAEEMIKDASGDPELEEMAKEELKESKAAKEEYEEKLKILLLPKDPNDDKNIILEIRGAAGGDEAALFAGDLLTMYQKYAETQGWRFEVMESSVNGVGGIKEVVAMVSGQSVYSKLKYESGAHRVQRVPVTESQGRVHTSTATVLVMPEVEEVEYDIDQKDLRVDIYHASGAGGQNVNKVATAVRMVHIPTGIKVEMQEERTQQKNRDKAMKIIRARVADHFAQIAQDEQDAERKSTVGTGDRSERIRTYNFPQNRVTDHRIGLTLQKLDTILSGKMDEVIDALVMYDQTKKLESLNN.

Q236 bears the N5-methylglutamine mark.

It belongs to the prokaryotic/mitochondrial release factor family. Post-translationally, methylated by PrmC. Methylation increases the termination efficiency of RF1.

It localises to the cytoplasm. In terms of biological role, peptide chain release factor 1 directs the termination of translation in response to the peptide chain termination codons UAG and UAA. This is Peptide chain release factor 1 from Streptococcus pyogenes serotype M12 (strain MGAS2096).